Reading from the N-terminus, the 881-residue chain is Probable alpha/beta-glucosidase agdC (881 aa).

The first 14 residues, 1–14 (MLRSLLLLAPLVGA), serve as a signal peptide directing secretion. N-linked (GlcNAc...) asparagine glycans are attached at residues asparagine 171, asparagine 293, and asparagine 373. Aspartate 422 acts as the Nucleophile in catalysis. Glutamate 425 is an active-site residue. Residues 440-485 (YARDNDLPPAAPPVRPSNPRPLPGFPGDFQPSSSSKRSTKGSKVGL) are disordered. The segment covering 448–463 (PAAPPVRPSNPRPLPG) has biased composition (pro residues). Asparagine 506 carries an N-linked (GlcNAc...) asparagine glycan. Residue aspartate 571 is the Proton donor of the active site. Residues asparagine 572, asparagine 608, and asparagine 742 are each glycosylated (N-linked (GlcNAc...) asparagine).

The protein belongs to the glycosyl hydrolase 31 family.

The protein localises to the secreted. It catalyses the reaction Hydrolysis of terminal, non-reducing (1-&gt;4)-linked alpha-D-glucose residues with release of alpha-D-glucose.. The enzyme catalyses Hydrolysis of terminal, non-reducing beta-D-glucosyl residues with release of beta-D-glucose.. Functionally, glucosidase involved in the degradation of cellulosic biomass. Has both alpha- and beta-glucosidase activity. The polypeptide is Probable alpha/beta-glucosidase agdC (agdC) (Aspergillus fumigatus (strain CBS 144.89 / FGSC A1163 / CEA10) (Neosartorya fumigata)).